A 777-amino-acid polypeptide reads, in one-letter code: Double zinc ribbon and ankyrin repeat-containing protein 1 (777 aa).

Basic and acidic residues predominate over residues 161–176 (QVGERTDPKTLKDLRF). The segment at 161–202 (QVGERTDPKTLKDLRFSESPLEIPAHSGGSGSRPPTRQSQSP) is disordered. Residues 193–202 (RPPTRQSQSP) show a composition bias toward polar residues. The residue at position 201 (S201) is a Phosphoserine. 2 consecutive DZANK-type zinc fingers follow at residues 230-289 (CAHC…CVVC) and 358-406 (CSRC…GSCG). ANK repeat units follow at residues 442–473 (NIPL…LLAK) and 477–506 (EIAS…GYWR).

As to quaternary structure, interacts with NINL. Associates with DYNC1H1 and multiple dynein intermediate and light chains as well as actin-binding proteins.

The protein localises to the cytoplasm. The protein resides in the cytoskeleton. It is found in the microtubule organizing center. It localises to the centrosome. Its subcellular location is the cilium basal body. Involved in vesicle transport in photoreceptor cells. This is Double zinc ribbon and ankyrin repeat-containing protein 1 (DZANK1) from Macaca fascicularis (Crab-eating macaque).